A 128-amino-acid polypeptide reads, in one-letter code: Small ribosomal subunit protein uS12 (128 aa).

The tract at residues 1–24 (MPTFNQLVKYGREKRKKKSKAPAL) is disordered. At aspartate 89 the chain carries 3-methylthioaspartic acid. The tract at residues 105 to 128 (AGVEGRRQSRSKYGTKRPKEEKGG) is disordered.

Belongs to the universal ribosomal protein uS12 family. As to quaternary structure, part of the 30S ribosomal subunit. Contacts proteins S8 and S17. May interact with IF1 in the 30S initiation complex.

With S4 and S5 plays an important role in translational accuracy. In terms of biological role, interacts with and stabilizes bases of the 16S rRNA that are involved in tRNA selection in the A site and with the mRNA backbone. Located at the interface of the 30S and 50S subunits, it traverses the body of the 30S subunit contacting proteins on the other side and probably holding the rRNA structure together. The combined cluster of proteins S8, S12 and S17 appears to hold together the shoulder and platform of the 30S subunit. This Aquifex aeolicus (strain VF5) protein is Small ribosomal subunit protein uS12.